Here is a 440-residue protein sequence, read N- to C-terminus: Xylose isomerase (440 aa).

Residues H100 and D103 contribute to the active site. 7 residues coordinate Mg(2+): E231, E267, H270, D295, D306, D308, and D338.

It belongs to the xylose isomerase family. In terms of assembly, homotetramer. It depends on Mg(2+) as a cofactor.

It localises to the cytoplasm. The catalysed reaction is alpha-D-xylose = alpha-D-xylulofuranose. This Burkholderia thailandensis (strain ATCC 700388 / DSM 13276 / CCUG 48851 / CIP 106301 / E264) protein is Xylose isomerase.